Here is a 261-residue protein sequence, read N- to C-terminus: Taurine import ATP-binding protein TauB (261 aa).

One can recognise an ABC transporter domain in the interval 4–233 (LQLEGIGAHY…RYSAGESARA (230 aa)). 38–45 (GPSGSGKT) is a binding site for ATP.

Belongs to the ABC transporter superfamily. Taurine importer (TC 3.A.1.17.1) family. The complex is composed of two ATP-binding proteins (TauB), two transmembrane proteins (TauC) and a solute-binding protein (TauA).

Its subcellular location is the cell inner membrane. It carries out the reaction taurine(out) + ATP + H2O = taurine(in) + ADP + phosphate + H(+). Its function is as follows. Part of the ABC transporter complex TauABC involved in taurine import. Responsible for energy coupling to the transport system. The protein is Taurine import ATP-binding protein TauB of Pseudomonas syringae pv. tomato (strain ATCC BAA-871 / DC3000).